The primary structure comprises 340 residues: Holliday junction branch migration complex subunit RuvB (340 aa).

The segment at 1–183 is large ATPase domain (RuvB-L); the sequence is MKRDDLVSPE…FGISFRLDYY (183 aa). ATP-binding positions include Leu22, Arg23, Gly64, Lys67, Thr68, Thr69, 130–132, Arg173, Tyr183, and Arg220; that span reads EDF. Mg(2+) is bound at residue Thr68. Residues 184–254 form a small ATPAse domain (RuvB-S) region; that stretch reads AVEELTKIIN…VAVHALEMLE (71 aa). The interval 257–340 is head domain (RuvB-H); the sequence is DRGFDQMDRS…KFEVGQKELF (84 aa). DNA is bound by residues Lys312 and Arg317.

It belongs to the RuvB family. In terms of assembly, homohexamer. Forms an RuvA(8)-RuvB(12)-Holliday junction (HJ) complex. HJ DNA is sandwiched between 2 RuvA tetramers; dsDNA enters through RuvA and exits via RuvB. An RuvB hexamer assembles on each DNA strand where it exits the tetramer. Each RuvB hexamer is contacted by two RuvA subunits (via domain III) on 2 adjacent RuvB subunits; this complex drives branch migration. In the full resolvosome a probable DNA-RuvA(4)-RuvB(12)-RuvC(2) complex forms which resolves the HJ.

The protein resides in the cytoplasm. It carries out the reaction ATP + H2O = ADP + phosphate + H(+). Its function is as follows. The RuvA-RuvB-RuvC complex processes Holliday junction (HJ) DNA during genetic recombination and DNA repair, while the RuvA-RuvB complex plays an important role in the rescue of blocked DNA replication forks via replication fork reversal (RFR). RuvA specifically binds to HJ cruciform DNA, conferring on it an open structure. The RuvB hexamer acts as an ATP-dependent pump, pulling dsDNA into and through the RuvAB complex. RuvB forms 2 homohexamers on either side of HJ DNA bound by 1 or 2 RuvA tetramers; 4 subunits per hexamer contact DNA at a time. Coordinated motions by a converter formed by DNA-disengaged RuvB subunits stimulates ATP hydrolysis and nucleotide exchange. Immobilization of the converter enables RuvB to convert the ATP-contained energy into a lever motion, pulling 2 nucleotides of DNA out of the RuvA tetramer per ATP hydrolyzed, thus driving DNA branch migration. The RuvB motors rotate together with the DNA substrate, which together with the progressing nucleotide cycle form the mechanistic basis for DNA recombination by continuous HJ branch migration. Branch migration allows RuvC to scan DNA until it finds its consensus sequence, where it cleaves and resolves cruciform DNA. This chain is Holliday junction branch migration complex subunit RuvB, found in Syntrophus aciditrophicus (strain SB).